The chain runs to 382 residues: Succinate--CoA ligase [ADP-forming] subunit beta (382 aa).

Residues 9–240 (KELFLRYGVK…PRDITEFEAY (232 aa)) enclose the ATP-grasp domain. Residues K45, 52–54 (GRG), V94, and E99 contribute to the ATP site. Residues N193 and D207 each contribute to the Mg(2+) site. Substrate contacts are provided by residues N260 and 317-319 (GIT).

It belongs to the succinate/malate CoA ligase beta subunit family. As to quaternary structure, heterotetramer of two alpha and two beta subunits. Requires Mg(2+) as cofactor.

The enzyme catalyses succinate + ATP + CoA = succinyl-CoA + ADP + phosphate. It carries out the reaction GTP + succinate + CoA = succinyl-CoA + GDP + phosphate. The protein operates within carbohydrate metabolism; tricarboxylic acid cycle; succinate from succinyl-CoA (ligase route): step 1/1. In terms of biological role, succinyl-CoA synthetase functions in the citric acid cycle (TCA), coupling the hydrolysis of succinyl-CoA to the synthesis of either ATP or GTP and thus represents the only step of substrate-level phosphorylation in the TCA. The beta subunit provides nucleotide specificity of the enzyme and binds the substrate succinate, while the binding sites for coenzyme A and phosphate are found in the alpha subunit. The protein is Succinate--CoA ligase [ADP-forming] subunit beta of Pyrobaculum islandicum (strain DSM 4184 / JCM 9189 / GEO3).